The chain runs to 70 residues: Chondroitin proteoglycan 9 (70 aa).

The first 19 residues, 1-19, serve as a signal peptide directing secretion; the sequence is MNFWHLLLLAVLFFVTVFG. O-linked (Xyl...) (chondroitin sulfate) serine glycans are attached at residues S25 and S27.

In Caenorhabditis briggsae, this protein is Chondroitin proteoglycan 9 (cpg-9).